The primary structure comprises 223 residues: Ubiquitin carboxyl-terminal hydrolase isozyme L1 (223 aa).

N-acetylmethionine is present on methionine 1. One can recognise a UCH catalytic domain in the interval 2-221; it reads QLKPMEINPE…VRFSAVALCK (220 aa). The interaction with ubiquitin stretch occupies residues 5-10; that stretch reads PMEINP. Cysteine 90 serves as the catalytic Nucleophile. Serine 125 carries the post-translational modification Phosphoserine. The active-site Proton donor is histidine 161. Residues 211–216 are interaction with ubiquitin; the sequence is EVRFSA. Cysteine 220 carries S-farnesyl cysteine lipidation. A propeptide spans 221–223 (removed in mature form); the sequence is KAA.

It belongs to the peptidase C12 family. As to quaternary structure, monomer. Homodimer. Interacts with COPS5 and SNCA. O-glycosylated. In terms of tissue distribution, expressed in brain, where it is found in neurons but not in oligodendrocytes or astrocytes. Found in the ganglion cell layer and the inner nuclear layer of the retina (at protein level). Expressed in brain and testis. In the brain, expression is at its lowest in replaceable neurons of hippocampus and olfactory bulb. Highly expressed in senescent pituitary. In skeletal muscle, primarily expressed in oxidative muscle fibers.

It localises to the cytoplasm. It is found in the endoplasmic reticulum membrane. It catalyses the reaction Thiol-dependent hydrolysis of ester, thioester, amide, peptide and isopeptide bonds formed by the C-terminal Gly of ubiquitin (a 76-residue protein attached to proteins as an intracellular targeting signal).. Functionally, deubiquitinase that plays a role in the regulation of several processes such as maintenance of synaptic function, cardiac function, inflammatory response or osteoclastogenesis. Abrogates the ubiquitination of multiple proteins including WWTR1/TAZ, EGFR, HIF1A and beta-site amyloid precursor protein cleaving enzyme 1/BACE1. In addition, recognizes and hydrolyzes a peptide bond at the C-terminal glycine of ubiquitin to maintain a stable pool of monoubiquitin that is a key requirement for the ubiquitin-proteasome and the autophagy-lysosome pathways. Regulates amyloid precursor protein/APP processing by promoting BACE1 degradation resulting in decreased amyloid beta production. Plays a role in the immune response by regulating the ability of MHC I molecules to reach cross-presentation compartments competent for generating Ag-MHC I complexes. Mediates the 'Lys-48'-linked deubiquitination of the transcriptional coactivator WWTR1/TAZ leading to its stabilization and inhibition of osteoclastogenesis. Deubiquitinates and stabilizes epidermal growth factor receptor EGFR to prevent its degradation and to activate its downstream mediators. Modulates oxidative activity in skeletal muscle by regulating key mitochondrial oxidative proteins. Enhances the activity of hypoxia-inducible factor 1-alpha/HIF1A by abrogateing its VHL E3 ligase-mediated ubiquitination and consequently inhibiting its degradation. This Mus musculus (Mouse) protein is Ubiquitin carboxyl-terminal hydrolase isozyme L1 (Uchl1).